Here is a 68-residue protein sequence, read N- to C-terminus: MPSVRSVTCCCLLWMMFSVQLVTPGSPATAQLSGQRTARGPGSAICNMACRLEHGHLYPFCHCRGKRD.

A signal peptide spans 1-27 (MPSVRSVTCCCLLWMMFSVQLVTPGSP). Positions 28-39 (ATAQLSGQRTAR) are excised as a propeptide. Cystine bridges form between Cys46–Cys61 and Cys50–Cys63. Arginine amide is present on Arg64. Residues 65-68 (GKRD) constitute a propeptide that is removed on maturation.

This sequence belongs to the conotoxin J superfamily. Expressed by the venom duct.

The protein localises to the secreted. Functionally, highly inhibits both nicotinic acetylcholine receptors (neuronal (alpha-3/beta-4) and muscular (alpha-1/beta-1/epsilon/delta) subtypes) and the voltage-gated potassium channel Kv1.6/KCNA6 subtype. This is Alpha/kappa-conotoxin-like pl14.2 from Conus planorbis (Planorbis cone).